Here is a 453-residue protein sequence, read N- to C-terminus: MNGLLASDKYVVIVGLGATGLSVARYLHLRGERFSVVDTREHPPGADELMALNNKVDHHFGAVEQPQIDLLLNAAEIVLSPGVDRRTDFIQAALKNNISIVGDIELFLREVQVPVVGITGSNGKSTVTALMAAVGAKAGFKTCAAGNIGLPVLDALQENAELYILELSSFQLESVSRPGLTVACMLNVSEDHMDRYNRFVDYCMAKQRIYFGAQNVVYNIDDKLTQPPIVDGVARRGFSLSKPIEEGESAFYFSADTGNLCAAKDNLINIDQIKIFGRHNVANVLAVFAMADALNITRAATCAAVQEFSGLDHRCQWVAKKRGVTFINDSKATNVGAAQAAIAGLSASFKRILLIAGGDGKDANFFSFGKLVDAHVAVLILMGRDAGAIADCVSDTTPVVQAQTMTEAVEVAFSSAEEGDLVLLSPACASFDMFAGFEDRGRQFAAAVEGLTE.

Residue 120-126 (GSNGKST) coordinates ATP.

This sequence belongs to the MurCDEF family.

The protein localises to the cytoplasm. It carries out the reaction UDP-N-acetyl-alpha-D-muramoyl-L-alanine + D-glutamate + ATP = UDP-N-acetyl-alpha-D-muramoyl-L-alanyl-D-glutamate + ADP + phosphate + H(+). It participates in cell wall biogenesis; peptidoglycan biosynthesis. In terms of biological role, cell wall formation. Catalyzes the addition of glutamate to the nucleotide precursor UDP-N-acetylmuramoyl-L-alanine (UMA). The polypeptide is UDP-N-acetylmuramoylalanine--D-glutamate ligase (Teredinibacter turnerae (strain ATCC 39867 / T7901)).